The chain runs to 471 residues: MGSKVAGKKKTQNDNKLDNENGSQQRENINTKTLLKGNLKISNYKYLEVIQLEHAVTKLVESYNKIIELSPNLVAYNEAVNNQDRVPVQILPSLSRYQLKLAAELKTLHDLKKDAILTEITDYENEFDTEQKQPILQEISKADMEKLEKLEQVKREKREKIDVNVYENLNEKEDEEEDEGEDSYDPTKAGDIVKATKWPPKLPEIQDLAIRARVFIHKSTIKDKVYLSGSEMINAHNERLEFLGDSILNSVMTLIIYNKFPDYSEGQLSTLRMNLVSNEQIKQWSIMYNFHEKLKTNFDLKDENSNFQNGKLKLYADVFEAYIGGLMEDDPRNNLPKIRKWLRKLAKPVIEEATRNQVALEKTDKLDMNAKRQLYSLIGYASLRLHYVTVKKPTAVDPNSIVECRVGDGTVLGTGVGRNIKIAGIRAAENALRDKKMLDFYAKQRAAIPRSESVLKDPSQKNKKRKFSDTS.

The segment covering 1–10 (MGSKVAGKKK) has biased composition (basic residues). 2 disordered regions span residues 1–29 (MGSK…RENI) and 168–189 (NLNE…PTKA). A compositionally biased stretch (polar residues) spans 20–29 (ENGSQQRENI). Residues 172–184 (KEDEEEDEGEDSY) show a composition bias toward acidic residues. Positions 227–331 (LSGSEMINAH…YIGGLMEDDP (105 aa)) constitute an RNase III domain. A DRBM domain is found at 369–437 (NAKRQLYSLI…AENALRDKKM (69 aa)). The segment at 451–471 (SESVLKDPSQKNKKRKFSDTS) is disordered. Residues 461 to 471 (KNKKRKFSDTS) show a composition bias toward basic residues.

The enzyme catalyses Endonucleolytic cleavage to 5'-phosphomonoester.. Its function is as follows. DsRNA-specific nuclease that cleaves eukaryotic pre-ribosomal RNA at the U3 snoRNP-dependent A0 site in the 5'-external transcribed spacer (ETS) and in the 3'-ETS. In vitro, cleaves synthetic 5'-ETS RNA A0 site in the absence of snoRNA or other factors. Has an essential growth function in addition to pre-rRNA processing. This Saccharomyces cerevisiae (strain ATCC 204508 / S288c) (Baker's yeast) protein is Ribonuclease 3 (RNT1).